Here is a 184-residue protein sequence, read N- to C-terminus: Thymidine kinase (184 aa).

ATP-binding positions include 15–22 (GPMFSGKS) and 89–92 (DEIQ). Catalysis depends on Glu90, which acts as the Proton acceptor. The Zn(2+) site is built by Cys146, Cys149, Cys178, and Cys181.

Belongs to the thymidine kinase family. In terms of assembly, homotetramer.

The protein localises to the cytoplasm. The enzyme catalyses thymidine + ATP = dTMP + ADP + H(+). This chain is Thymidine kinase, found in Mesomycoplasma hyopneumoniae (strain 232) (Mycoplasma hyopneumoniae).